A 469-amino-acid chain; its full sequence is UDP-N-acetylmuramate--L-alanine ligase (469 aa).

113–119 (GTHGKTT) lines the ATP pocket.

Belongs to the MurCDEF family.

The protein localises to the cytoplasm. The catalysed reaction is UDP-N-acetyl-alpha-D-muramate + L-alanine + ATP = UDP-N-acetyl-alpha-D-muramoyl-L-alanine + ADP + phosphate + H(+). The protein operates within cell wall biogenesis; peptidoglycan biosynthesis. Its function is as follows. Cell wall formation. The protein is UDP-N-acetylmuramate--L-alanine ligase of Neisseria meningitidis serogroup C / serotype 2a (strain ATCC 700532 / DSM 15464 / FAM18).